The following is a 139-amino-acid chain: MATIAQLIRKPRQKKKVKSKSPALHYNLNLLNKKTTNVYSPLKRGVCTRVGTMTPRKPNSALRKYAKVRLTNGFEVLAYIPGEGHNLQEHSVTLLRGGRVKDLPGVRYHIVRGTLDTVGVDKRRQQRSAYGAKKPKPKS.

Residues 119 to 139 (GVDKRRQQRSAYGAKKPKPKS) form a disordered region.

Belongs to the universal ribosomal protein uS12 family. In terms of assembly, part of the 30S ribosomal subunit. Contacts proteins S8 and S17. May interact with IF1 in the 30S initiation complex.

With S4 and S5 plays an important role in translational accuracy. Functionally, interacts with and stabilizes bases of the 16S rRNA that are involved in tRNA selection in the A site and with the mRNA backbone. Located at the interface of the 30S and 50S subunits, it traverses the body of the 30S subunit contacting proteins on the other side and probably holding the rRNA structure together. The combined cluster of proteins S8, S12 and S17 appears to hold together the shoulder and platform of the 30S subunit. This Mycoplasma genitalium (strain ATCC 33530 / DSM 19775 / NCTC 10195 / G37) (Mycoplasmoides genitalium) protein is Small ribosomal subunit protein uS12.